The primary structure comprises 478 residues: Isoeugenol monooxygenase (478 aa).

Residues His167, His218, His282, and His471 each contribute to the Fe cation site.

Belongs to the carotenoid oxygenase family. In terms of assembly, monomer. It depends on Fe(2+) as a cofactor.

It carries out the reaction (E)-isoeugenol + O2 = vanillin + acetaldehyde. Inhibited by HgCl(2), AgNO(3), CuCl(2), phenylhydrazine, 8-hydroxyquinoline, R-cycloserine and p-chloromercuribenzoic acid. Functionally, involved in isoeugenol degradation. Catalyzes the oxidative cleavage of the side chain double-bond of isoeugenol to form vanillin and acetaldehyde. In Pseudomonas putida (Arthrobacter siderocapsulatus), this protein is Isoeugenol monooxygenase.